We begin with the raw amino-acid sequence, 183 residues long: Large ribosomal subunit protein uL5 (183 aa).

The protein belongs to the universal ribosomal protein uL5 family. As to quaternary structure, part of the 50S ribosomal subunit; part of the 5S rRNA/L5/L18/L25 subcomplex. Contacts the 5S rRNA and the P site tRNA. Forms a bridge to the 30S subunit in the 70S ribosome.

This is one of the proteins that bind and probably mediate the attachment of the 5S RNA into the large ribosomal subunit, where it forms part of the central protuberance. In the 70S ribosome it contacts protein S13 of the 30S subunit (bridge B1b), connecting the 2 subunits; this bridge is implicated in subunit movement. Contacts the P site tRNA; the 5S rRNA and some of its associated proteins might help stabilize positioning of ribosome-bound tRNAs. The chain is Large ribosomal subunit protein uL5 from Flavobacterium johnsoniae (strain ATCC 17061 / DSM 2064 / JCM 8514 / BCRC 14874 / CCUG 350202 / NBRC 14942 / NCIMB 11054 / UW101) (Cytophaga johnsonae).